An 858-amino-acid polypeptide reads, in one-letter code: Leucine--tRNA ligase (858 aa).

A 'HIGH' region motif is present at residues 42–52 (PYPSGRLHMGH). Positions 618–622 (KMSKS) match the 'KMSKS' region motif. ATP is bound at residue Lys621.

It belongs to the class-I aminoacyl-tRNA synthetase family.

It localises to the cytoplasm. It catalyses the reaction tRNA(Leu) + L-leucine + ATP = L-leucyl-tRNA(Leu) + AMP + diphosphate. The sequence is that of Leucine--tRNA ligase from Vibrio atlanticus (strain LGP32) (Vibrio splendidus (strain Mel32)).